The chain runs to 405 residues: Elongation factor Tu (405 aa).

Positions 10–213 (KEHVNVGTIG…AMDEYIPTPQ (204 aa)) constitute a tr-type G domain. A G1 region spans residues 19–26 (GHVDHGKS). 19–26 (GHVDHGKS) lines the GTP pocket. Residue S26 participates in Mg(2+) binding. A G2 region spans residues 64–68 (GITIN). The segment at 85–88 (DCPG) is G3. GTP-binding positions include 85–89 (DCPGH) and 140–143 (NKCD). Residues 140–143 (NKCD) are G4. A G5 region spans residues 178 to 180 (SAL).

It belongs to the TRAFAC class translation factor GTPase superfamily. Classic translation factor GTPase family. EF-Tu/EF-1A subfamily. Monomer.

It is found in the cytoplasm. The enzyme catalyses GTP + H2O = GDP + phosphate + H(+). In terms of biological role, GTP hydrolase that promotes the GTP-dependent binding of aminoacyl-tRNA to the A-site of ribosomes during protein biosynthesis. This is Elongation factor Tu from Aquifex aeolicus (strain VF5).